We begin with the raw amino-acid sequence, 512 residues long: Maturase K (512 aa).

It belongs to the intron maturase 2 family. MatK subfamily.

Its subcellular location is the plastid. It localises to the chloroplast. Usually encoded in the trnK tRNA gene intron. Probably assists in splicing its own and other chloroplast group II introns. The sequence is that of Maturase K from Amorphophallus abyssinicus (Black arum).